The primary structure comprises 431 residues: Glutamate-1-semialdehyde 2,1-aminomutase (431 aa).

The residue at position 265 (K265) is an N6-(pyridoxal phosphate)lysine.

Belongs to the class-III pyridoxal-phosphate-dependent aminotransferase family. HemL subfamily. As to quaternary structure, homodimer. It depends on pyridoxal 5'-phosphate as a cofactor.

The protein resides in the cytoplasm. The enzyme catalyses (S)-4-amino-5-oxopentanoate = 5-aminolevulinate. It functions in the pathway porphyrin-containing compound metabolism; protoporphyrin-IX biosynthesis; 5-aminolevulinate from L-glutamyl-tRNA(Glu): step 2/2. The protein is Glutamate-1-semialdehyde 2,1-aminomutase of Aliivibrio salmonicida (strain LFI1238) (Vibrio salmonicida (strain LFI1238)).